The following is a 218-amino-acid chain: MLKKQTVWLLTMLSLVVVLSVYYIMSPESKNAVQMQSEKSASDSGEVATEKAPAKQDTKEKSGTETEKGKEDGTKGTKDSSADKETSAEASEKGTVVTETADDDLFTTYRLDLEDARSKEREELNAIVSSDDATAKEKSEAYDKMTALSEVEGTEKQLETLIKTQGYEDALVNAEGDKINITVKSDKHSKSKATAIIDLVAKEIKTMKDVAVTFEPSK.

The helical transmembrane segment at 7–26 (VWLLTMLSLVVVLSVYYIMS) threads the bilayer. A compositionally biased stretch (polar residues) spans 33–43 (VQMQSEKSASD). Positions 33 to 99 (VQMQSEKSAS…ASEKGTVVTE (67 aa)) are disordered. The span at 48–92 (ATEKAPAKQDTKEKSGTETEKGKEDGTKGTKDSSADKETSAEASE) shows a compositional bias: basic and acidic residues.

In terms of assembly, interacts with SpoIIQ.

It is found in the cell membrane. In terms of biological role, involved in forespore engulfment. Forms a channel with SpoIIIAH that is open on the forespore end and closed (or gated) on the mother cell end. This allows sigma-E-directed gene expression in the mother-cell compartment of the sporangium to trigger the activation of sigma-G forespore-specific gene expression by a pathway of intercellular signaling. This Bacillus subtilis (strain 168) protein is Stage III sporulation protein AH (spoIIIAH).